We begin with the raw amino-acid sequence, 460 residues long: Dynactin subunit 4 (460 aa).

Ala2 carries the N-acetylalanine modification. The stretch at 152-172 forms a coiled coil; the sequence is QQLAQKEKVERDRKKLARRRN. Ser196 bears the Phosphoserine mark. A Glycyl lysine isopeptide (Lys-Gly) (interchain with G-Cter in SUMO2) cross-link involves residue Lys215. The residue at position 407 (Thr407) is a Phosphothreonine.

It belongs to the dynactin subunit 4 family. In terms of assembly, subunit of dynactin, a multiprotein complex part of a tripartite complex with dynein and a adapter, such as BICDL1, BICD2 or HOOK3. The dynactin complex is built around ACTR1A/ACTB filament and consists of an actin-related filament composed of a shoulder domain, a pointed end and a barbed end. Its length is defined by its flexible shoulder domain. The soulder is composed of 2 DCTN1 subunits, 4 DCTN2 and 2 DCTN3. The 4 DCNT2 (via N-terminus) bind the ACTR1A filament and act as molecular rulers to determine the length. The pointed end is important for binding dynein-dynactin cargo adapters. Consists of 4 subunits: ACTR10, DCNT4, DCTN5 and DCTN6. The barbed end is composed of a CAPZA1:CAPZB heterodimers, which binds ACTR1A/ACTB filament and dynactin and stabilizes dynactin. Interacts with ATP7B, but not ATP7A, in a copper-dependent manner. Interacts with ANK2; this interaction is required for localization at costameres. Interacts with N4BP2L1.

The protein localises to the cytoplasm. It is found in the cytoskeleton. It localises to the microtubule organizing center. The protein resides in the centrosome. Its subcellular location is the stress fiber. The protein localises to the cell cortex. It is found in the myofibril. It localises to the sarcomere. In terms of biological role, part of the dynactin complex that activates the molecular motor dynein for ultra-processive transport along microtubules. This chain is Dynactin subunit 4, found in Homo sapiens (Human).